The chain runs to 842 residues: Glycogen phosphorylase, muscle form (842 aa).

Serine 2 carries the N-acetylserine modification. Position 15 is a phosphoserine; by PHK; in form phosphorylase A (serine 15). AMP-binding residues include aspartate 43 and tyrosine 76. Tyrosine 204 and tyrosine 227 each carry phosphotyrosine. 310–319 (RRFKSSKFGC) is an AMP binding site. Residue serine 430 is modified to Phosphoserine. Tyrosine 473 is subject to Phosphotyrosine. At lysine 681 the chain carries N6-(pyridoxal phosphate)lysine. Serine 747 and serine 748 each carry phosphoserine.

This sequence belongs to the glycogen phosphorylase family. In terms of assembly, homodimer. Homotetramer; to form the enzymatically active phosphorylase A. Pyridoxal 5'-phosphate is required as a cofactor. Post-translationally, phosphorylation of Ser-15 converts phosphorylase B (unphosphorylated) to phosphorylase A.

The enzyme catalyses [(1-&gt;4)-alpha-D-glucosyl](n) + phosphate = [(1-&gt;4)-alpha-D-glucosyl](n-1) + alpha-D-glucose 1-phosphate. Its activity is regulated as follows. Allosterically regulated through the non-covalent binding of metabolites, being activated by AMP and inhibited by ATP, ADP, and glucose-6-phosphate. The activity is also controlled by post-translational modifications including phosphorylation. Allosteric enzyme that catalyzes the rate-limiting step in glycogen catabolism, the phosphorolytic cleavage of glycogen to produce glucose-1-phosphate, and plays a central role in maintaining cellular and organismal glucose homeostasis. In Bos taurus (Bovine), this protein is Glycogen phosphorylase, muscle form.